We begin with the raw amino-acid sequence, 83 residues long: Exodeoxyribonuclease 7 small subunit (83 aa).

The protein belongs to the XseB family. In terms of assembly, heterooligomer composed of large and small subunits.

Its subcellular location is the cytoplasm. The enzyme catalyses Exonucleolytic cleavage in either 5'- to 3'- or 3'- to 5'-direction to yield nucleoside 5'-phosphates.. Its function is as follows. Bidirectionally degrades single-stranded DNA into large acid-insoluble oligonucleotides, which are then degraded further into small acid-soluble oligonucleotides. This Moorella thermoacetica (strain ATCC 39073 / JCM 9320) protein is Exodeoxyribonuclease 7 small subunit.